We begin with the raw amino-acid sequence, 465 residues long: Clusterin-like protein 1 (465 aa).

The N-terminal stretch at 1-20 (MKPSLLVFTVYLLWLKDCHC) is a signal peptide. Residues 62-106 (MMERREEEHTNLMKTLKKCKEEKQEALKLMNEVQEHLEEEESLCQ) are a coiled coil. 4 disulfide bridges follow: C105–C333, C116–C325, C119–C322, and C124–C315. N-linked (GlcNAc...) asparagine glycans are attached at residues N196, N257, N285, N311, N351, N412, and N430.

This sequence belongs to the clusterin family. As to expression, retina-specific (at protein level). In the light-adapted retina, expressed in the outer segment of cone photoreceptors. In the dark-adapted retina, strongly expressed in the outer plexiform layer in the region of contact between the cone pedicles and second order neurons with little or no expression in the cone photoreceptor outer segments.

The protein resides in the secreted. The protein is Clusterin-like protein 1 (CLUL1) of Canis lupus familiaris (Dog).